The primary structure comprises 331 residues: Glyceraldehyde-3-phosphate dehydrogenase (331 aa).

NAD(+)-binding positions include Arg12–Ile13, Asp34, Arg78, and Thr120. D-glyceraldehyde 3-phosphate-binding positions include Ser149–Thr151, Thr180, Thr209–Gly210, and Arg232. Cys150 serves as the catalytic Nucleophile. Asn314 contributes to the NAD(+) binding site.

Belongs to the glyceraldehyde-3-phosphate dehydrogenase family. As to quaternary structure, homotetramer.

The protein localises to the cytoplasm. It carries out the reaction D-glyceraldehyde 3-phosphate + phosphate + NAD(+) = (2R)-3-phospho-glyceroyl phosphate + NADH + H(+). The protein operates within carbohydrate degradation; glycolysis; pyruvate from D-glyceraldehyde 3-phosphate: step 1/5. In terms of biological role, catalyzes the oxidative phosphorylation of glyceraldehyde 3-phosphate (G3P) to 1,3-bisphosphoglycerate (BPG) using the cofactor NAD. The first reaction step involves the formation of a hemiacetal intermediate between G3P and a cysteine residue, and this hemiacetal intermediate is then oxidized to a thioester, with concomitant reduction of NAD to NADH. The reduced NADH is then exchanged with the second NAD, and the thioester is attacked by a nucleophilic inorganic phosphate to produce BPG. The chain is Glyceraldehyde-3-phosphate dehydrogenase (gapA) from Escherichia fergusonii (strain ATCC 35469 / DSM 13698 / CCUG 18766 / IAM 14443 / JCM 21226 / LMG 7866 / NBRC 102419 / NCTC 12128 / CDC 0568-73).